Here is a 124-residue protein sequence, read N- to C-terminus: Small ribosomal subunit protein uS12 (124 aa).

The disordered stretch occupies residues 105-124; the sequence is SGVNDRRQGRSKYGAKRPKS. Positions 113–124 are enriched in basic residues; that stretch reads GRSKYGAKRPKS.

This sequence belongs to the universal ribosomal protein uS12 family. As to quaternary structure, part of the 30S ribosomal subunit. Contacts proteins S8 and S17. May interact with IF1 in the 30S initiation complex.

In terms of biological role, with S4 and S5 plays an important role in translational accuracy. Interacts with and stabilizes bases of the 16S rRNA that are involved in tRNA selection in the A site and with the mRNA backbone. Located at the interface of the 30S and 50S subunits, it traverses the body of the 30S subunit contacting proteins on the other side and probably holding the rRNA structure together. The combined cluster of proteins S8, S12 and S17 appears to hold together the shoulder and platform of the 30S subunit. The sequence is that of Small ribosomal subunit protein uS12 from Idiomarina loihiensis (strain ATCC BAA-735 / DSM 15497 / L2-TR).